Reading from the N-terminus, the 908-residue chain is DNA mismatch repair protein MutS (908 aa).

Position 662 to 669 (662 to 669 (GPNMGGKS)) interacts with ATP.

Belongs to the DNA mismatch repair MutS family.

Functionally, this protein is involved in the repair of mismatches in DNA. It is possible that it carries out the mismatch recognition step. This protein has a weak ATPase activity. The chain is DNA mismatch repair protein MutS from Rhizobium johnstonii (strain DSM 114642 / LMG 32736 / 3841) (Rhizobium leguminosarum bv. viciae).